The primary structure comprises 470 residues: ATP synthase subunit beta (470 aa).

155–162 is a binding site for ATP; the sequence is GGAGVGKT.

Belongs to the ATPase alpha/beta chains family. As to quaternary structure, F-type ATPases have 2 components, CF(1) - the catalytic core - and CF(0) - the membrane proton channel. CF(1) has five subunits: alpha(3), beta(3), gamma(1), delta(1), epsilon(1). CF(0) has three main subunits: a(1), b(2) and c(9-12). The alpha and beta chains form an alternating ring which encloses part of the gamma chain. CF(1) is attached to CF(0) by a central stalk formed by the gamma and epsilon chains, while a peripheral stalk is formed by the delta and b chains.

It localises to the cell inner membrane. The catalysed reaction is ATP + H2O + 4 H(+)(in) = ADP + phosphate + 5 H(+)(out). Its function is as follows. Produces ATP from ADP in the presence of a proton gradient across the membrane. The catalytic sites are hosted primarily by the beta subunits. This is ATP synthase subunit beta from Oleidesulfovibrio alaskensis (strain ATCC BAA-1058 / DSM 17464 / G20) (Desulfovibrio alaskensis).